A 320-amino-acid chain; its full sequence is GPI-specific phospholipase A2-like PGAP3 (320 aa).

The N-terminal stretch at Met1–Gly20 is a signal peptide. The Lumenal portion of the chain corresponds to Ser21–Arg98. Asn40 carries an N-linked (GlcNAc...) asparagine glycan. A helical transmembrane segment spans residues Phe99–Leu119. Residues Val120–Met135 are Cytoplasmic-facing. The chain crosses the membrane as a helical span at residues Tyr136–Phe156. The Lumenal segment spans residues His157–Tyr169. The chain crosses the membrane as a helical span at residues Phe170–Leu190. Topologically, residues Gln191–Ala198 are cytoplasmic. A helical transmembrane segment spans residues Phe199–Phe219. At Asp220–Tyr223 the chain is on the lumenal side. A helical transmembrane segment spans residues Asn224–Leu244. The Cytoplasmic portion of the chain corresponds to Arg245–Ala258. Residues Val259–Trp279 traverse the membrane as a helical segment. The Lumenal portion of the chain corresponds to Val280–Asp282. The helical transmembrane segment at Ala283 to Glu303 threads the bilayer. The Cytoplasmic portion of the chain corresponds to Asp304 to Asp320.

The protein belongs to the PGAP3 family.

The protein resides in the golgi apparatus membrane. Functionally, involved in the fatty acid remodeling steps of GPI-anchor maturation where the unsaturated acyl chain at sn-2 of inositol phosphate is replaced by a saturated stearoyl chain. May catalyze the first step of the fatty acid remodeling, by removing the unsaturated acyl chain at sn-2 of inositol phosphate, generating a lyso-GPI intermediate. The fatty acid remodeling steps is critical for the integration of GPI-APs into lipid rafts. In Cricetulus griseus (Chinese hamster), this protein is GPI-specific phospholipase A2-like PGAP3 (PGAP3).